A 680-amino-acid chain; its full sequence is DNA-directed RNA polymerase subunit beta' (680 aa).

Zn(2+)-binding residues include cysteine 69, cysteine 71, cysteine 87, and cysteine 90. Aspartate 489, aspartate 491, and aspartate 493 together coordinate Mg(2+).

It belongs to the RNA polymerase beta' chain family. RpoC1 subfamily. As to quaternary structure, in plastids the minimal PEP RNA polymerase catalytic core is composed of four subunits: alpha, beta, beta', and beta''. When a (nuclear-encoded) sigma factor is associated with the core the holoenzyme is formed, which can initiate transcription. Mg(2+) is required as a cofactor. The cofactor is Zn(2+).

The protein resides in the plastid. Its subcellular location is the chloroplast. The catalysed reaction is RNA(n) + a ribonucleoside 5'-triphosphate = RNA(n+1) + diphosphate. Its function is as follows. DNA-dependent RNA polymerase catalyzes the transcription of DNA into RNA using the four ribonucleoside triphosphates as substrates. The protein is DNA-directed RNA polymerase subunit beta' of Nandina domestica (Heavenly bamboo).